Consider the following 31-residue polypeptide: Conotoxin pc6b (31 aa).

Disulfide bonds link cysteine 2/cysteine 20, cysteine 9/cysteine 25, and cysteine 19/cysteine 29.

This sequence belongs to the conotoxin O1 superfamily. In terms of tissue distribution, expressed by the venom duct.

The protein resides in the secreted. The chain is Conotoxin pc6b from Conus pictus (Cone snail).